The following is a 213-amino-acid chain: Orotate phosphoribosyltransferase (213 aa).

Lysine 26 is a 5-phospho-alpha-D-ribose 1-diphosphate binding site. Position 34–35 (34–35 (FF)) interacts with orotate. 5-phospho-alpha-D-ribose 1-diphosphate contacts are provided by residues 72-73 (YK), arginine 99, lysine 100, lysine 103, histidine 105, and 124-132 (DDVITAGTA). Orotate contacts are provided by threonine 128 and arginine 156.

The protein belongs to the purine/pyrimidine phosphoribosyltransferase family. PyrE subfamily. Homodimer. The cofactor is Mg(2+).

It catalyses the reaction orotidine 5'-phosphate + diphosphate = orotate + 5-phospho-alpha-D-ribose 1-diphosphate. It participates in pyrimidine metabolism; UMP biosynthesis via de novo pathway; UMP from orotate: step 1/2. Catalyzes the transfer of a ribosyl phosphate group from 5-phosphoribose 1-diphosphate to orotate, leading to the formation of orotidine monophosphate (OMP). This is Orotate phosphoribosyltransferase from Escherichia coli O157:H7.